The chain runs to 574 residues: Proline--tRNA ligase (574 aa).

This sequence belongs to the class-II aminoacyl-tRNA synthetase family. ProS type 1 subfamily. As to quaternary structure, homodimer.

The protein resides in the cytoplasm. The catalysed reaction is tRNA(Pro) + L-proline + ATP = L-prolyl-tRNA(Pro) + AMP + diphosphate. Its function is as follows. Catalyzes the attachment of proline to tRNA(Pro) in a two-step reaction: proline is first activated by ATP to form Pro-AMP and then transferred to the acceptor end of tRNA(Pro). As ProRS can inadvertently accommodate and process non-cognate amino acids such as alanine and cysteine, to avoid such errors it has two additional distinct editing activities against alanine. One activity is designated as 'pretransfer' editing and involves the tRNA(Pro)-independent hydrolysis of activated Ala-AMP. The other activity is designated 'posttransfer' editing and involves deacylation of mischarged Ala-tRNA(Pro). The misacylated Cys-tRNA(Pro) is not edited by ProRS. The sequence is that of Proline--tRNA ligase from Ralstonia nicotianae (strain ATCC BAA-1114 / GMI1000) (Ralstonia solanacearum).